The sequence spans 1774 residues: Collagen alpha-1(XVIII) chain (1774 aa).

Residues 1–26 (MAPDPSRRLCLLLLLLLSCRLVPASA) form the signal peptide. Positions 27–785 (DGNSLSPLNP…QNPGRGLIKG (759 aa)) are nonhelical region 1 (NC1). Disordered regions lie at residues 47–113 (DSLE…TPAV) and 218–269 (LPPF…LEGK). Polar residues-rich tracts occupy residues 55 to 87 (KPQN…TPAS) and 244 to 256 (LSSS…SWGN). 2 N-linked (GlcNAc...) asparagine glycosylation sites follow: asparagine 354 and asparagine 361. In terms of domain architecture, FZ spans 365–482 (TSTSRCLPLP…SQEDGYCVFI (118 aa)). Cystine bridges form between cysteine 370–cysteine 433, cysteine 380–cysteine 426, cysteine 417–cysteine 455, cysteine 444–cysteine 479, and cysteine 448–cysteine 468. The Laminin G-like domain maps to 522-704 (GPDSNSGQVA…EDRASGDFGS (183 aa)). An N-linked (GlcNAc...) asparagine glycan is attached at asparagine 585. Residues 681–1458 (RVSPVHCLDE…PPGPPGAMGA (778 aa)) are disordered. Basic and acidic residues predominate over residues 708–717 (ESSKSHKEDT). Threonine 730 bears the Phosphothreonine mark. Residues 786–812 (GMKGQKGEPGAQGPPGPAGPQGPAGPV) are triple-helical region 1 (COL1). Residues 809–824 (AGPVVQSPNSQPVPGA) show a composition bias toward low complexity. The tract at residues 813-822 (VQSPNSQPVP) is nonhelical region 2 (NC2). Residues 823–878 (GAQGPPGPQGPPGKDGTPGRDGEPGDPGEDGRPGDTGPQGFPGTPGDVGPKGEKGD) form the Collagen-like 1 domain. Residues 823–896 (GAQGPPGPQG…PGPPGPPGPS (74 aa)) are triple-helical region 2 (COL2). Over residues 839 to 855 (TPGRDGEPGDPGEDGRP) the composition is skewed to basic and acidic residues. A compositionally biased stretch (pro residues) spans 884–895 (RGPPGPPGPPGP). The segment at 897–920 (FRQDKLTFIDMEGSGFSGDIESLR) is nonhelical region 3 (NC3). O-linked (Xyl...) (chondroitin sulfate) serine glycosylation is present at serine 910. The tract at residues 921 to 1042 (GPRGFPGPPG…PGPPGPPGPG (122 aa)) is triple-helical region 3 (COL3). A compositionally biased stretch (pro residues) spans 925–935 (FPGPPGPPGVP). Asparagine 947 carries an N-linked (GlcNAc...) asparagine glycan. Residues 951–963 (APGPAGLPGVPGK) show a composition bias toward low complexity. 2 Collagen-like domains span residues 953–1007 (GPAG…GSKG) and 1008–1041 (DLGP…PPGP). Pro residues-rich tracts occupy residues 967 to 982 (PGFP…PGKE) and 1026 to 1041 (PVGP…PPGP). A nonhelical region 4 (NC4) region spans residues 1043-1065 (FAAGFDDMEGSGIPLWTTARSSD). Collagen-like domains lie at 1066–1117 (GLQG…GPKG), 1118–1147 (EKGM…PPGP), 1162–1202 (PGPE…GEPG), and 1216–1264 (QKGA…EPGD). The interval 1066–1148 (GLQGPPGSPG…PGPPGPPGPV (83 aa)) is triple-helical region 4 (COL4). The span at 1138-1147 (LPGPPGPPGP) shows a compositional bias: pro residues. Positions 1149-1162 (IYVSSEDKAIVSTP) are nonhelical region 5 (NC5). The triple-helical region 5 (COL5) stretch occupies residues 1163–1204 (GPEGKPGYAGFPGPAGPKGDLGSKGEQGLPGPKGEKGEPGTI). The segment at 1205–1217 (FSPDGRALGHPQK) is nonhelical region 6 (NC6). The triple-helical region 6 (COL6) stretch occupies residues 1218 to 1290 (GAKGEPGFRG…PGPPGPPGMP (73 aa)). Over residues 1275 to 1289 (PGPPGPPGPPGPPGM) the composition is skewed to pro residues. The interval 1291-1300 (IYDSNAFVES) is nonhelical region 7 (NC7). The span at 1301-1317 (GRPGLPGQQGVQGPSGP) shows a compositional bias: low complexity. Positions 1301–1333 (GRPGLPGQQGVQGPSGPKGDKGEVGPPGPPGQF) are triple-helical region 7 (COL7). Positions 1334 to 1345 (PIDLFHLEAEMK) are nonhelical region 8 (NC8). Over residues 1338–1362 (FHLEAEMKGDKGDRGDAGQKGERGE) the composition is skewed to basic and acidic residues. A triple-helical region 8 (COL8) region spans residues 1346–1369 (GDKGDRGDAGQKGERGEPGAPGGG). Positions 1351-1353 (RGD) match the Cell attachment site motif. A nonhelical region 9 (NC9) region spans residues 1370–1376 (FFSSSVP). Pro residues-rich tracts occupy residues 1376–1388 (PGPP…PGIP), 1398–1407 (PPGPPGPQGP), 1418–1431 (PPGP…PSFP), and 1441–1453 (PGPP…PGPP). Positions 1377–1428 (GPPGPPGYPGIPGPKGESIRGPPGPPGPQGPPGIGYEGRQGPPGPPGPPGPP) are triple-helical region 9 (COL9). The nonhelical region 10 (NC10) stretch occupies residues 1429–1441 (SFPGPHRQTVSVP). A triple-helical region 10 (COL10) region spans residues 1442 to 1459 (GPPGPPGPPGPPGAMGAS). Positions 1460-1774 (AGQVRIWATY…ENSFMTSFSK (315 aa)) are nonhelical region 11 (NC11). The non-collagenous domain 1 association domain stretch occupies residues 1474-1519 (DKIREVPEGWLIFVAEREELYVRVRNGFRKVLLEARTALPRGTGNE). The non-collagenous domain 1 hinge region stretch occupies residues 1520–1590 (VAALQPPLVQ…PPARPTLSLA (71 aa)). 5 residues coordinate Zn(2+): histidine 1591, histidine 1593, aspartate 1595, histidine 1601, and aspartate 1666. Disulfide bonds link cysteine 1623–cysteine 1763 and cysteine 1725–cysteine 1755.

The protein belongs to the multiplexin collagen family. In terms of assembly, forms homotrimers. Recombinant non-collagenous domain 1 has stronger affinity to NID1, HSPG2 and laminin-1:NID1 complex and lower affinity to FBLN1 and FBLN2 than endostatin. Monomeric. Interacts with KDR/VEGFR2. Interacts with the ITGA5:ITGB1 complex. Interacts with NID1, HSPG2, laminin-1:NID1 complex, FBLN1 and FBLN2. Post-translationally, prolines at the third position of the tripeptide repeating unit (G-X-Y) of the triple-helical regions are hydroxylated. In terms of processing, undergoes proteolytic processing by CTSL/cathepsin-L and elastase-like proteases to generate both non-collagenous domain 1 trimers and endostatin monomers. In tissue extracts (brain, skeletal muscle, heart, kidney, testis and liver) predominantly bands of approximately 38 kDa are detected; recombinant non-collagenous domain 1 shows similar mobility. In vitro, several proteolytic cleavage sites in the non-collagenous domain 1 hinge region generating different endostatin-like peptides are reported. In terms of tissue distribution, expressed in liver, kidney, lung, skeletal muscle and testis.

The protein localises to the secreted. It localises to the extracellular space. The protein resides in the extracellular matrix. Its subcellular location is the basement membrane. Functionally, probably plays a major role in determining the retinal structure as well as in the closure of the neural tube. In terms of biological role, may regulate extracellular matrix-dependent motility and morphogenesis of endothelial and non-endothelial cells; the function requires homotrimerization and implicates MAPK signaling. Potently inhibits endothelial cell proliferation and angiogenesis. May inhibit angiogenesis by binding to the heparan sulfate proteoglycans involved in growth factor signaling. Inhibits VEGFA isoform VEGF165-induced endothelial cell proliferation and migration. Seems to inhibit VEGFA-mediated signaling by blocking the interaction of VEGFA to its receptor KDR/VEGFR2. Modulates endothelial cell migration in an integrin-dependent manner implicating integrin ITGA5:ITGB1 and to a lesser extent ITGAV:ITGB3 and ITGAV:ITGB5. May negatively regulate the activity of homotrimeric non-collagenous domain 1. This chain is Collagen alpha-1(XVIII) chain, found in Mus musculus (Mouse).